Here is an 87-residue protein sequence, read N- to C-terminus: RNA-binding protein Hfq (87 aa).

Residues 9 to 68 (DPFLNALRRERIPVSIYLVNGIKLQGQIESFDQFVILLKNTVSQMVYKHAISTVVPARAV) enclose the Sm domain.

This sequence belongs to the Hfq family. In terms of assembly, homohexamer.

RNA chaperone that binds small regulatory RNA (sRNAs) and mRNAs to facilitate mRNA translational regulation in response to envelope stress, environmental stress and changes in metabolite concentrations. Also binds with high specificity to tRNAs. This chain is RNA-binding protein Hfq, found in Aeromonas salmonicida (strain A449).